The following is a 153-amino-acid chain: Phosphopantetheine adenylyltransferase (153 aa).

Position 11 (Ser-11) interacts with substrate. ATP contacts are provided by residues 11-12 (SF) and His-19. 3 residues coordinate substrate: Lys-43, Thr-75, and Arg-89. Residues 90-92 (GIR), Glu-100, and 124-130 (LSFISSS) each bind ATP.

The protein belongs to the bacterial CoaD family. Homohexamer. Requires Mg(2+) as cofactor.

It localises to the cytoplasm. The enzyme catalyses (R)-4'-phosphopantetheine + ATP + H(+) = 3'-dephospho-CoA + diphosphate. It functions in the pathway cofactor biosynthesis; coenzyme A biosynthesis; CoA from (R)-pantothenate: step 4/5. Its function is as follows. Reversibly transfers an adenylyl group from ATP to 4'-phosphopantetheine, yielding dephospho-CoA (dPCoA) and pyrophosphate. The polypeptide is Phosphopantetheine adenylyltransferase (Porphyromonas gingivalis (strain ATCC 33277 / DSM 20709 / CIP 103683 / JCM 12257 / NCTC 11834 / 2561)).